Consider the following 297-residue polypeptide: N-acetylmuramoyl-L-alanine amidase XlyA (297 aa).

The first 44 residues, 1-44 (MVNIIQDFIPVGANNRPGYAMTPLYITVHNTANTAVGADAAAHA), serve as a signal peptide directing secretion. Positions 45-140 (RYLKNPDTTT…KYWSGKECPR (96 aa)) constitute an N-acetylmuramoyl-L-alanine amidase domain. One can recognise a LysM domain in the interval 159–203 (QTYVVKQGDTLTSIARAFGVTVAQLQEWNNIEDPNLIRVGQVLIV).

The protein belongs to the N-acetylmuramoyl-L-alanine amidase 2 family.

The protein localises to the secreted. It catalyses the reaction Hydrolyzes the link between N-acetylmuramoyl residues and L-amino acid residues in certain cell-wall glycopeptides.. In terms of biological role, autolysins are involved in some important biological processes such as cell separation, cell-wall turnover, competence for genetic transformation, formation of the flagella and sporulation. The protein is N-acetylmuramoyl-L-alanine amidase XlyA (xlyA) of Bacillus subtilis (strain 168).